Reading from the N-terminus, the 126-residue chain is Large ribosomal subunit protein bL12 (126 aa).

It belongs to the bacterial ribosomal protein bL12 family. In terms of assembly, homodimer. Part of the ribosomal stalk of the 50S ribosomal subunit. Forms a multimeric L10(L12)X complex, where L10 forms an elongated spine to which 2 to 4 L12 dimers bind in a sequential fashion. Binds GTP-bound translation factors.

Functionally, forms part of the ribosomal stalk which helps the ribosome interact with GTP-bound translation factors. Is thus essential for accurate translation. The protein is Large ribosomal subunit protein bL12 of Paracidovorax citrulli (strain AAC00-1) (Acidovorax citrulli).